The chain runs to 228 residues: Putative adhesin A1I_01215 (228 aa).

An N-terminal signal peptide occupies residues 1-22 (MKKLLLIAATSATVLSSALSFA).

The protein is Putative adhesin A1I_01215 of Rickettsia bellii (strain OSU 85-389).